We begin with the raw amino-acid sequence, 530 residues long: CTP synthase (530 aa).

An amidoligase domain region spans residues 1 to 267 (MTKYVFVTGG…DDFVLNHFKM (267 aa)). Residue S13 coordinates CTP. S13 serves as a coordination point for UTP. Residue 14–19 (SLGKGI) participates in ATP binding. Y54 serves as a coordination point for L-glutamine. D71 is a binding site for ATP. Mg(2+) contacts are provided by D71 and E141. Residues 148 to 150 (DIE), 188 to 193 (KTKPTQ), and K224 contribute to the CTP site. UTP-binding positions include 188 to 193 (KTKPTQ) and K224. 240 to 242 (RDA) serves as a coordination point for ATP. The region spanning 292–530 (KIALVGKYIE…LFKAFIGATM (239 aa)) is the Glutamine amidotransferase type-1 domain. G354 contacts L-glutamine. The active-site Nucleophile; for glutamine hydrolysis is C381. L-glutamine is bound by residues 382–385 (LGMQ), E405, and R463. Active-site residues include H508 and E510.

This sequence belongs to the CTP synthase family. In terms of assembly, homotetramer.

The catalysed reaction is UTP + L-glutamine + ATP + H2O = CTP + L-glutamate + ADP + phosphate + 2 H(+). The enzyme catalyses L-glutamine + H2O = L-glutamate + NH4(+). It carries out the reaction UTP + NH4(+) + ATP = CTP + ADP + phosphate + 2 H(+). The protein operates within pyrimidine metabolism; CTP biosynthesis via de novo pathway; CTP from UDP: step 2/2. Its activity is regulated as follows. Allosterically activated by GTP, when glutamine is the substrate; GTP has no effect on the reaction when ammonia is the substrate. The allosteric effector GTP functions by stabilizing the protein conformation that binds the tetrahedral intermediate(s) formed during glutamine hydrolysis. Inhibited by the product CTP, via allosteric rather than competitive inhibition. Its function is as follows. Catalyzes the ATP-dependent amination of UTP to CTP with either L-glutamine or ammonia as the source of nitrogen. Regulates intracellular CTP levels through interactions with the four ribonucleotide triphosphates. This is CTP synthase from Latilactobacillus sakei subsp. sakei (strain 23K) (Lactobacillus sakei subsp. sakei).